We begin with the raw amino-acid sequence, 187 residues long: Ribulose bisphosphate carboxylase small subunit, chloroplastic (187 aa).

Residues 1–56 (MASSVMSTATVATGANAAQASMIASFNGLKSAASFPVTRKQDLDITSIASNGGRVE) constitute a chloroplast transit peptide.

Belongs to the RuBisCO small chain family. As to quaternary structure, heterohexadecamer of 8 large and 8 small subunits.

It localises to the plastid. It is found in the chloroplast. Functionally, ruBisCO catalyzes two reactions: the carboxylation of D-ribulose 1,5-bisphosphate, the primary event in carbon dioxide fixation, as well as the oxidative fragmentation of the pentose substrate. Both reactions occur simultaneously and in competition at the same active site. Although the small subunit is not catalytic it is essential for maximal activity. The chain is Ribulose bisphosphate carboxylase small subunit, chloroplastic from Capsicum annuum (Capsicum pepper).